The sequence spans 142 residues: Transcription antitermination protein NusB (142 aa).

The protein belongs to the NusB family.

Functionally, involved in transcription antitermination. Required for transcription of ribosomal RNA (rRNA) genes. Binds specifically to the boxA antiterminator sequence of the ribosomal RNA (rrn) operons. The polypeptide is Transcription antitermination protein NusB (Persephonella marina (strain DSM 14350 / EX-H1)).